The following is a 177-amino-acid chain: Trafficking regulator of GLUT4 1 (177 aa).

Residues 1–105 (MAHPVQSEFP…QDQEAPRDYL (105 aa)) are Cytoplasmic-facing. Phosphoserine is present on residues S48, S87, and S88. A disordered region spans residues 71–92 (EAPLPRSPSRASSRRASSIATT). A compositionally biased stretch (low complexity) spans 72-88 (APLPRSPSRASSRRASS). The helical intramembrane region spans 106–126 (ILAVVACFCPVWPLNLIPLII). Over 127–153 (SIMSRSSMQQGNVDGARRLGRLARLLS) the chain is Cytoplasmic. A helical transmembrane segment spans residues 154–174 (ITLIIMGIVIIMVAVTVNFTV). Residues 175 to 177 (QKK) lie on the Extracellular side of the membrane.

This sequence belongs to the CD225/Dispanin family. Interacts with SLC2A4; the interaction is required for proper SLC2A4 reacycling after insulin stimulation. As to expression, expressed at high levels in heart, mammary gland, adrenal gland, stomach, smooth muscle and skeletal muscle, and at lower levels in brain and lung. Strongly down-regulated in lung cancer tissues, due to hypermethylation of the corresponding locus. Expressed in adipose tissue.

It localises to the cell membrane. It is found in the endomembrane system. The protein localises to the cytoplasm. The protein resides in the perinuclear region. Regulates insulin-mediated adipose tissue glucose uptake and transport by modulation of SLC2A4 recycling. Not required for SLC2A4 membrane fusion upon an initial stimulus, but rather is necessary for proper protein recycling during prolonged insulin stimulation. This chain is Trafficking regulator of GLUT4 1, found in Homo sapiens (Human).